A 270-amino-acid chain; its full sequence is 4-hydroxy-tetrahydrodipicolinate reductase (270 aa).

7–12 contacts NAD(+); the sequence is GANGRM. Arg-34 lines the NADP(+) pocket. Residues 97–99 and 121–124 contribute to the NAD(+) site; these read GTT and SGNM. Catalysis depends on His-155, which acts as the Proton donor/acceptor. His-156 is a (S)-2,3,4,5-tetrahydrodipicolinate binding site. Catalysis depends on Lys-159, which acts as the Proton donor. 165 to 166 lines the (S)-2,3,4,5-tetrahydrodipicolinate pocket; sequence GT.

This sequence belongs to the DapB family.

The protein localises to the cytoplasm. It catalyses the reaction (S)-2,3,4,5-tetrahydrodipicolinate + NAD(+) + H2O = (2S,4S)-4-hydroxy-2,3,4,5-tetrahydrodipicolinate + NADH + H(+). The enzyme catalyses (S)-2,3,4,5-tetrahydrodipicolinate + NADP(+) + H2O = (2S,4S)-4-hydroxy-2,3,4,5-tetrahydrodipicolinate + NADPH + H(+). It functions in the pathway amino-acid biosynthesis; L-lysine biosynthesis via DAP pathway; (S)-tetrahydrodipicolinate from L-aspartate: step 4/4. In terms of biological role, catalyzes the conversion of 4-hydroxy-tetrahydrodipicolinate (HTPA) to tetrahydrodipicolinate. The sequence is that of 4-hydroxy-tetrahydrodipicolinate reductase from Bartonella tribocorum (strain CIP 105476 / IBS 506).